Consider the following 231-residue polypeptide: Cytidylate kinase (231 aa).

11–19 (GHSSCGKST) provides a ligand contact to ATP.

Belongs to the cytidylate kinase family. Type 1 subfamily.

The protein localises to the cytoplasm. It catalyses the reaction CMP + ATP = CDP + ADP. It carries out the reaction dCMP + ATP = dCDP + ADP. The sequence is that of Cytidylate kinase from Porphyromonas gingivalis (strain ATCC BAA-308 / W83).